Reading from the N-terminus, the 503-residue chain is Glutamate--tRNA ligase (503 aa).

Positions Pro12–Gly22 match the 'HIGH' region motif. The 'KMSKS' region motif lies at Lys259–Arg263. An ATP-binding site is contributed by Lys262.

It belongs to the class-I aminoacyl-tRNA synthetase family. Glutamate--tRNA ligase type 1 subfamily. Monomer.

It is found in the cytoplasm. It carries out the reaction tRNA(Glu) + L-glutamate + ATP = L-glutamyl-tRNA(Glu) + AMP + diphosphate. Catalyzes the attachment of glutamate to tRNA(Glu) in a two-step reaction: glutamate is first activated by ATP to form Glu-AMP and then transferred to the acceptor end of tRNA(Glu). The protein is Glutamate--tRNA ligase of Chloroherpeton thalassium (strain ATCC 35110 / GB-78).